The primary structure comprises 311 residues: 3-dehydro-scyllo-inosose hydrolase (311 aa).

Positions 35, 37, 46, 117, and 173 each coordinate Zn(2+).

This sequence belongs to the creatininase superfamily. As to quaternary structure, homotrimer. Zn(2+) is required as a cofactor.

The enzyme catalyses 3-dehydro-scyllo-inosose + H2O = 5-dehydro-L-gluconate + H(+). It functions in the pathway polyol metabolism; myo-inositol metabolism. In terms of biological role, catalyzes the ring-opening hydrolysis of 3-dehydro-scyllo-inosose (diketo-inositol) to 5-dehydro-L-gluconate, and thus probably functions in a myo-inositol degradation pathway together with IolG, IolM and IolO. This chain is 3-dehydro-scyllo-inosose hydrolase, found in Thermotoga maritima (strain ATCC 43589 / DSM 3109 / JCM 10099 / NBRC 100826 / MSB8).